Consider the following 732-residue polypeptide: Bromodomain-containing factor 1 (732 aa).

The span at 1-22 (MSETFPETNTPVQTPSTESFVN) shows a compositional bias: polar residues. Disordered regions lie at residues 1 to 207 (MSET…NLPE), 324 to 380 (TNVA…ETKP), 491 to 517 (NKPV…EDNV), 556 to 600 (REQQ…TPPQ), and 700 to 732 (VNGQ…SEEE). The span at 37–51 (SQDSDSNQQSSHQEP) shows a compositional bias: low complexity. A compositionally biased stretch (polar residues) spans 89–100 (ASQTGVIQTEVS). The segment covering 137–147 (EAPEENPQEEV) has biased composition (acidic residues). Residues 206–315 (PENPIPQHQA…AQFEKLMVKV (110 aa)) enclose the Bromo 1 domain. Residues 327–338 (AEATSVATSPTT) are compositionally biased toward polar residues. Residues 370-380 (KSKELPYETKP) are compositionally biased toward basic and acidic residues. The region spanning 383 to 492 (KKVAAELRFC…AVFDKKWANK (110 aa)) is the Bromo 2 domain. Residues 529 to 569 (AIQVMENQIIRMRKELDELKKEHLKKLREQQAARKKKKQQK) adopt a coiled-coil conformation. Residues 561–579 (ARKKKKQQKGKRRAPKAKH) show a composition bias toward basic residues. Over residues 590–600 (PPEPPKLTPPQ) the composition is skewed to pro residues. One can recognise an NET domain in the interval 593–672 (PPKLTPPQPV…GDKALKNSAG (80 aa)). Residues 718 to 732 (ESSEDEASSESSEEE) show a composition bias toward acidic residues.

It belongs to the BET family.

It localises to the nucleus. Functionally, transcription factor involved in the expression of a broad class of genes including snRNAs. Required for sporulation and DNA-damage repair. Prevents the spreading of SIR silencing at telomeres and protects histone H4, but not H3, from deacetylation. The protein is Bromodomain-containing factor 1 (BDF1) of Candida albicans (strain SC5314 / ATCC MYA-2876) (Yeast).